The sequence spans 514 residues: Cytochrome P450 monooxygenase MO6277 (514 aa).

Residues 6 to 26 (LTVLALLGGTLLLYCSGLVIY) form a helical membrane-spanning segment. Cys-457 provides a ligand contact to heme.

This sequence belongs to the cytochrome P450 family. The cofactor is heme.

It is found in the membrane. It catalyses the reaction polyporic acid + reduced [NADPH--hemoprotein reductase] + O2 = ascocorynin + oxidized [NADPH--hemoprotein reductase] + H2O + H(+). Its pathway is secondary metabolite biosynthesis. In terms of biological role, cytochrome P450 monooxygenase that hydroxylates polyporic acid produced by the nonribosomal peptide synthetase acyN to produce the less toxic metabolite ascocorynin. The hydrophobic substrate polyporic acid might approach the active site from the membrane and, after hydroxylation into ascocorynin, leaves into the cytoplasm. MO6277 appears vital to avoid high-level accumulation of polyporic acid in the fungal membrane. The polypeptide is Cytochrome P450 monooxygenase MO6277 (Ascocoryne sarcoides (Purple jellydisc fungus)).